We begin with the raw amino-acid sequence, 400 residues long: LIM/homeobox protein Lhx3 (400 aa).

2 LIM zinc-binding domains span residues 34-84 (CAGC…CKDD) and 93-147 (CAAC…CKAD). Residue Ser-74 is modified to Phosphoserine. Positions 160 to 219 (AKRPRTTITAKQLETLKSAYNTSPKPARHVREQLSSETGLDMRVVQVWFQNRRAKEKRLK) form a DNA-binding region, homeobox. Disordered stretches follow at residues 215 to 280 (EKRL…SSLG) and 297 to 400 (TLDH…HAQF). Residue Tyr-230 is modified to Phosphotyrosine. Phosphoserine is present on residues Ser-237 and Ser-241. Pro residues-rich tracts occupy residues 319-334 (GIPP…PGPQ) and 352-361 (SGPPGGPPPM). Over residues 368-380 (GPSSDLSTESSSG) the composition is skewed to polar residues.

Interacts with POU1F1. At neuronal promoters, interacts with LDB1, in motor neurons LDB1 is displaced by ISL1 and a ternary complex is formed in which ISL1 contacts both LHX3 and LDB1; allosteric structural changes in the DNA binding domain of LHX3, induced by the ISL1-LHX3 interaction, may explain differences in sequence specificity of the different complexes. Interacts with LDB2. May interact with CITED2/MRG1. Mostly expressed in the pituitary anterior and intermediate lobes. It is also expressed in the pineal gland and transiently in the primordia of motor neurons including the spinal cord, pons and medulla oblongata.

The protein localises to the nucleus. Functionally, transcription factor. Recognizes and binds to the consensus sequence motif 5'-AATTAATTA-3' in the regulatory elements of target genes, such as glycoprotein hormones alpha chain CGA and visual system homeobox CHX10, positively modulating transcription; transcription can be co-activated by LDB2. Synergistically enhances transcription from the prolactin promoter in cooperation with POU1F1/Pit-1. Required for the establishment of the specialized cells of the pituitary gland and the nervous system. Involved in the development of interneurons and motor neurons in cooperation with LDB1 and ISL1. This is LIM/homeobox protein Lhx3 (Lhx3) from Mus musculus (Mouse).